Here is a 276-residue protein sequence, read N- to C-terminus: Formamidopyrimidine-DNA glycosylase (276 aa).

The Schiff-base intermediate with DNA role is filled by Pro2. Glu3 serves as the catalytic Proton donor. Lys60 functions as the Proton donor; for beta-elimination activity in the catalytic mechanism. The DNA site is built by His93 and Arg112. The FPG-type zinc-finger motif lies at 240–274 (NVYGKKGEPCVTCGTILEKTVVGGRGTHYCPICQP). Arg264 (proton donor; for delta-elimination activity) is an active-site residue.

It belongs to the FPG family. As to quaternary structure, monomer. Zn(2+) serves as cofactor.

The catalysed reaction is Hydrolysis of DNA containing ring-opened 7-methylguanine residues, releasing 2,6-diamino-4-hydroxy-5-(N-methyl)formamidopyrimidine.. It catalyses the reaction 2'-deoxyribonucleotide-(2'-deoxyribose 5'-phosphate)-2'-deoxyribonucleotide-DNA = a 3'-end 2'-deoxyribonucleotide-(2,3-dehydro-2,3-deoxyribose 5'-phosphate)-DNA + a 5'-end 5'-phospho-2'-deoxyribonucleoside-DNA + H(+). Its function is as follows. Involved in base excision repair of DNA damaged by oxidation or by mutagenic agents. Acts as a DNA glycosylase that recognizes and removes damaged bases. Has a preference for oxidized purines, such as 7,8-dihydro-8-oxoguanine (8-oxoG). Has AP (apurinic/apyrimidinic) lyase activity and introduces nicks in the DNA strand. Cleaves the DNA backbone by beta-delta elimination to generate a single-strand break at the site of the removed base with both 3'- and 5'-phosphates. The chain is Formamidopyrimidine-DNA glycosylase from Bacillus cereus (strain ATCC 10987 / NRS 248).